The chain runs to 645 residues: Beta-galactosidase (645 aa).

Arg102 provides a ligand contact to substrate. Residue Cys106 coordinates Zn(2+). Asn140 contacts substrate. Glu141 (proton donor) is an active-site residue. Residues Cys150, Cys152, and Cys155 each coordinate Zn(2+). Residue Glu312 is the Nucleophile of the active site. Residues Trp320 and 360–363 (EQMH) each bind substrate.

This sequence belongs to the glycosyl hydrolase 42 family. As to quaternary structure, homotrimer.

It carries out the reaction Hydrolysis of terminal non-reducing beta-D-galactose residues in beta-D-galactosides.. With respect to regulation, inhibited by Cu(2+) and Fe(2+), and moderately activated by divalent cations such as Co(2+), Mn(2+) and Zn(2+). Considerably activated by dithiothreitol, beta-mercaptoethanol and cysteine. The protein is Beta-galactosidase of Thermus thermophilus.